We begin with the raw amino-acid sequence, 169 residues long: Protein GrpE (169 aa).

The tract at residues 1-25 (MSEEKQNGQIQEETVENSENQNNEL) is disordered. Residues 7–23 (NGQIQEETVENSENQNN) are compositionally biased toward polar residues.

This sequence belongs to the GrpE family. As to quaternary structure, homodimer.

The protein localises to the cytoplasm. Functionally, participates actively in the response to hyperosmotic and heat shock by preventing the aggregation of stress-denatured proteins, in association with DnaK and GrpE. It is the nucleotide exchange factor for DnaK and may function as a thermosensor. Unfolded proteins bind initially to DnaJ; upon interaction with the DnaJ-bound protein, DnaK hydrolyzes its bound ATP, resulting in the formation of a stable complex. GrpE releases ADP from DnaK; ATP binding to DnaK triggers the release of the substrate protein, thus completing the reaction cycle. Several rounds of ATP-dependent interactions between DnaJ, DnaK and GrpE are required for fully efficient folding. This chain is Protein GrpE, found in Campylobacter lari (strain RM2100 / D67 / ATCC BAA-1060).